The sequence spans 93 residues: Parbolysin P4 (93 aa).

3 cysteine pairs are disulfide-bonded: C16-C37, C22-C33, and C47-C60.

This sequence belongs to the worm cytolysin family. In terms of tissue distribution, localized within the skin and proboscis and are most readily isolated from body mucus secretions.

It localises to the secreted. Functionally, cytolysin that shows hemolytic activity (on bovine erythrocytes, HC(50)=5.75 mg/ml). This hemolytic activity is completely inhibited by small unilamelar vesicles composed of PC/PG, PC/PI and PC/PS in 1:1 molar ratios (with at least 100 mg/ml concentration). This Parborlasia corrugatus (Antarctic nemertean worm) protein is Parbolysin P4.